We begin with the raw amino-acid sequence, 675 residues long: MHHVNKYFNQTMVIEALKMSFYKLNPKQLIKNPIMFVVEVGMVLTLILICFPDIFGTSYLSRGYLITIFIILLITILFANFSEAFAEGRGKAQADSLRQAQSNLTARLIEENGAYRIVNATELKAGQNIRVENGETIPADGVVINGLATVDESAITGESAPVIKESGGDFDGVIGGTLVTSDWLEIRVESEAGTSFLDKMIALVEGAERNKTPNEIALFTLLTTLTIIFLVVIVTLYPIASYLHLILPIAMLIALTVCLIPTTIGGLLSAIGIAGMDRVTQFNVLAKSGRAVEVCGDVDVMILDKTGTITYGNRIASEFLPVNQQMLEKLIVAAYMSSIYDDTPEGKSIVRLAKQMYINELPKDIDGTYKPFTAETRMSGIITNEISVFKGAPNSMINLVKQQQGNIPLNIESLCMDVSSKGGTPLIVIENNVMLGVIYLKDVIKDGLVERFTELRKMGIETVMCTGDNALTAATIAKEAGVDRFVAECKPEDKIKVIKDEQAKGHIVAMTGDGTNDAPALAQANIGLAMNSGTISAKEAANLIDLDSNPTKLIEVVKIGKQLLMTRGALTTFSLANDVAKYFAILPALMMSTIPEMTSLNIMHLSSPKSAIISALIFNALIIVALIPIAMKGVKVKGYSIDRIFINNMLIYGLGGLIVPFLGIKLIDMIVQFFV.

4 helical membrane passes run 34–54, 65–85, 216–236, and 245–265; these read IMFVVEVGMVLTLILICFPDI, LITIFIILLITILFANFSEAF, IALFTLLTTLTIIFLVVIVTL, and LILPIAMLIALTVCLIPTTIG. D304 functions as the 4-aspartylphosphate intermediate in the catalytic mechanism. ATP is bound by residues D341, E345, 372–379, and K390; that span reads FTAETRMS. The Mg(2+) site is built by D513 and D517. 3 helical membrane-spanning segments follow: residues 569–591, 611–631, and 644–664; these read ALTTFSLANDVAKYFAILPALMM, AIISALIFNALIIVALIPIAM, and IFINNMLIYGLGGLIVPFLGI.

Belongs to the cation transport ATPase (P-type) (TC 3.A.3) family. Type IA subfamily. The system is composed of three essential subunits: KdpA, KdpB and KdpC.

Its subcellular location is the cell membrane. The catalysed reaction is K(+)(out) + ATP + H2O = K(+)(in) + ADP + phosphate + H(+). In terms of biological role, part of the high-affinity ATP-driven potassium transport (or Kdp) system, which catalyzes the hydrolysis of ATP coupled with the electrogenic transport of potassium into the cytoplasm. This subunit is responsible for energy coupling to the transport system and for the release of the potassium ions to the cytoplasm. The protein is Potassium-transporting ATPase ATP-binding subunit 2 of Staphylococcus aureus (strain Mu50 / ATCC 700699).